The following is a 247-amino-acid chain: Terpene cyclase adrI (247 aa).

The next 5 membrane-spanning stretches (helical) occupy residues 20 to 40 (VAEF…FSML), 51 to 71 (TGIF…FIYP), 76 to 96 (HWEG…FFII), 112 to 132 (NLYF…YSFA), and 141 to 161 (FFYG…AQIL). A glycan (N-linked (GlcNAc...) asparagine) is linked at asparagine 164. Helical transmembrane passes span 179-199 (FGGF…GPWF) and 205-225 (KFYI…YYVI).

It belongs to the paxB family.

It is found in the membrane. Its pathway is secondary metabolite biosynthesis; terpenoid biosynthesis. Functionally, terpene cyclase; part of the gene cluster that mediates the biosynthesis of andrastins, meroterpenoid compounds that exhibit inhibitory activity against ras farnesyltransferase, suggesting that they could be promising leads for antitumor agents. The first step of the pathway is the synthesis of 3,5-dimethylorsellinic acid (DMOA) by the polyketide synthase adrD via condensation of one acetyl-CoA starter unit with 3 malonyl-CoA units and 2 methylations. DMAO is then converted to farnesyl-DMAO by the prenyltransferase adrG. The methyltransferase adrK catalyzes the methylation of the carboxyl group of farnesyl-DMAO to farnesyl-DMAO methyl ester which is further converted to epoxyfarnesyl-DMAO methyl ester by the FAD-dependent monooxygenase adrH. The terpene cyclase adrI then catalyzes the carbon skeletal rearrangement to generate the andrastin E, the first compound in the pathway having the andrastin scaffold, with the tetracyclic ring system. The post-cyclization tailoring enzymes adrF, adrE, adrJ, and adrA, are involved in the conversion of andrastin E into andrastin A. The short chain dehydrogenase adrF is responsible for the oxidation of the C-3 a hydroxyl group of andrastin E to yield the corresponding ketone, andrastin D. The ketoreductase adrE stereoselectively reduces the carbonyl moiety to reverse the stereochemistry of the C-3 position to yield andrastin F. The acetyltransferase adrJ is the acetyltransferase that attaches the acetyl group to the C-3 hydroxyl group of andrastin F to yield andrastin C. Finally, the cytochrome P450 monooxygenase adrA catalyzes two sequential oxidation reactions of the C-23 methyl group, to generate the corresponding alcohol andrastin B, and aldehyde andrastin A. The chain is Terpene cyclase adrI from Penicillium rubens (strain ATCC 28089 / DSM 1075 / NRRL 1951 / Wisconsin 54-1255) (Penicillium chrysogenum).